Here is a 432-residue protein sequence, read N- to C-terminus: Probable M18 family aminopeptidase 2 (432 aa).

Residues histidine 86, histidine 157, and histidine 408 each contribute to the Zn(2+) site.

It belongs to the peptidase M18 family. The cofactor is Zn(2+).

The chain is Probable M18 family aminopeptidase 2 (apeB) from Streptomyces coelicolor (strain ATCC BAA-471 / A3(2) / M145).